Reading from the N-terminus, the 68-residue chain is Protein transport protein Sec61 subunit gamma (68 aa).

An N-acetylmethionine modification is found at Met-1. Residues 1 to 32 (MDQVMQFVEPSRQFVKDSIRLVKRCTKPDRKE) are Cytoplasmic-facing. Ser-18 carries the post-translational modification Phosphoserine. The chain crosses the membrane as a helical span at residues 33–61 (FQKIAMATAIGFAIMGFIGFFVKLIHIPI). Residues 62-68 (NNIIVGG) are Extracellular-facing.

Belongs to the SecE/SEC61-gamma family. The SEC61 channel-forming translocon complex consists of channel-forming core components SEC61A1, SEC61B and SEC61G and different auxiliary components such as SEC62 and SEC63. The SEC61 channel associates with the multi-pass translocon (MPT) complex.

Its subcellular location is the endoplasmic reticulum membrane. Its function is as follows. Component of SEC61 channel-forming translocon complex that mediates transport of signal peptide-containing precursor polypeptides across the endoplasmic reticulum (ER). Forms a ribosome receptor and a gated pore in the ER membrane, both functions required for cotranslational translocation of nascent polypeptides. The SEC61 channel is also involved in ER membrane insertion of transmembrane proteins: it mediates membrane insertion of the first few transmembrane segments of proteins, while insertion of subsequent transmembrane regions of multi-pass membrane proteins is mediated by the multi-pass translocon (MPT) complex. The SEC61 channel cooperates with the translocating protein TRAM1 to import nascent proteins into the ER. The chain is Protein transport protein Sec61 subunit gamma (SEC61G) from Bos taurus (Bovine).